The following is a 448-amino-acid chain: Glutamyl-tRNA reductase (448 aa).

Substrate contacts are provided by residues T49–R52, S109, E114–Q116, and Q120. The active-site Nucleophile is C50. Residue G189 to G194 participates in NADP(+) binding.

The protein belongs to the glutamyl-tRNA reductase family. In terms of assembly, homodimer.

It carries out the reaction (S)-4-amino-5-oxopentanoate + tRNA(Glu) + NADP(+) = L-glutamyl-tRNA(Glu) + NADPH + H(+). It participates in porphyrin-containing compound metabolism; protoporphyrin-IX biosynthesis; 5-aminolevulinate from L-glutamyl-tRNA(Glu): step 1/2. In terms of biological role, catalyzes the NADPH-dependent reduction of glutamyl-tRNA(Glu) to glutamate 1-semialdehyde (GSA). In Staphylococcus epidermidis (strain ATCC 35984 / DSM 28319 / BCRC 17069 / CCUG 31568 / BM 3577 / RP62A), this protein is Glutamyl-tRNA reductase.